Here is a 644-residue protein sequence, read N- to C-terminus: Type III restriction-modification enzyme EcoP15I Mod subunit (644 aa).

Positions 123–126 (DPPY) are binding of S-adenosyl methionine.

This sequence belongs to the N(4)/N(6)-methyltransferase family. Forms a homodimer capable of methylating the target sequence in the absence of Res. A heterotetramer with stoichiometry Res(2)Mod(2). A heterotrimer with stoichiometry Res(1)Mod(2).

The catalysed reaction is a 2'-deoxyadenosine in DNA + S-adenosyl-L-methionine = an N(6)-methyl-2'-deoxyadenosine in DNA + S-adenosyl-L-homocysteine + H(+). Its function is as follows. A beta subtype methylase that binds the system-specific DNA recognition site 5'-CAGCAG-3' and methylates A-5 (of only 1 strand as the other does not have an A residue). DNA restriction requires both the Res and Mod subunits. The A-5 nucleotide flips into the catalytic pocket of one Mod subunit for modification, while the other Mod subunit makes most of the DNA sequence-specific contacts. This Escherichia coli protein is Type III restriction-modification enzyme EcoP15I Mod subunit.